The following is a 245-amino-acid chain: RNA polymerase sigma factor SigI5 (245 aa).

The Polymerase core binding signature appears at 60–73 (DEYSIGLMAFNEAI). Positions 202 to 221 (MKELSKIIDVHPKTVERNRA) form a DNA-binding region, H-T-H motif.

Belongs to the sigma-70 factor family. SigI subfamily. Interacts with RsgI5.

It is found in the cytoplasm. Its activity is regulated as follows. Negatively regulated by the anti-sigma-I factor RsgI5. Binding of the polysaccharide substrate to RsgI5 may lead to the release and activation of SigI5. Sigma factors are initiation factors that promote the attachment of RNA polymerase to specific initiation sites and are then released. This sigma factor is involved in regulation of cellulosomal genes via an external polysaccharide-sensing mechanism. In Acetivibrio thermocellus (strain ATCC 27405 / DSM 1237 / JCM 9322 / NBRC 103400 / NCIMB 10682 / NRRL B-4536 / VPI 7372) (Clostridium thermocellum), this protein is RNA polymerase sigma factor SigI5.